The chain runs to 919 residues: Phosphoenolpyruvate carboxylase (919 aa).

Catalysis depends on residues His-138 and Lys-579.

Belongs to the PEPCase type 1 family. Requires Mg(2+) as cofactor.

It catalyses the reaction oxaloacetate + phosphate = phosphoenolpyruvate + hydrogencarbonate. Functionally, forms oxaloacetate, a four-carbon dicarboxylic acid source for the tricarboxylic acid cycle. The polypeptide is Phosphoenolpyruvate carboxylase (ppc) (Corynebacterium efficiens (strain DSM 44549 / YS-314 / AJ 12310 / JCM 11189 / NBRC 100395)).